Reading from the N-terminus, the 496-residue chain is L-carnitine dehydrogenase/betainyl-CoA thioesterase (496 aa).

Positions 1 to 335 (MTTITKAACI…KRLWEKGGSP (335 aa)) are L-carnitine dehydrogenase. 11–16 (GGGVIG) provides a ligand contact to NAD(+). The interval 336–496 (SKSLDASGPL…GAGRHVGQKR (161 aa)) is betainyl-CoA thioesterase.

This sequence in the N-terminal section; belongs to the 3-hydroxyacyl-CoA dehydrogenase family. L-carnitine dehydrogenase subfamily. In the C-terminal section; belongs to the betainyl-CoA thioesterase family. Homodimer.

Its subcellular location is the cytoplasm. It catalyses the reaction carnitine + NAD(+) = 3-dehydrocarnitine + NADH + H(+). It carries out the reaction N,N,N-trimethylglycyl-CoA + H2O = glycine betaine + CoA + H(+). Its pathway is amine and polyamine metabolism; carnitine metabolism. In terms of biological role, multifunctional enzyme that catalyzes the NAD(+)-dependent oxidation of L-carnitine to 3-dehydrocarnitine and the cleavage of betainyl-CoA (N,N,N-trimethylglycyl-CoA) into glycine betaine and coenzyme A. Can also hydrolyze L-carnitinyl-CoA, but with much lower efficiency. Is involved in a L-carnitine degradation pathway that allows R.meliloti to grow on L-carnitine as the sole source of carbon and nitrogen. The sequence is that of L-carnitine dehydrogenase/betainyl-CoA thioesterase from Rhizobium meliloti (strain 1021) (Ensifer meliloti).